Here is a 206-residue protein sequence, read N- to C-terminus: Ribosomal RNA small subunit methyltransferase G (206 aa).

S-adenosyl-L-methionine-binding positions include glycine 73, leucine 78, 124–125 (VE), and arginine 139.

This sequence belongs to the methyltransferase superfamily. RNA methyltransferase RsmG family.

It is found in the cytoplasm. It carries out the reaction guanosine(527) in 16S rRNA + S-adenosyl-L-methionine = N(7)-methylguanosine(527) in 16S rRNA + S-adenosyl-L-homocysteine. Its function is as follows. Specifically methylates the N7 position of guanine in position 527 of 16S rRNA. This chain is Ribosomal RNA small subunit methyltransferase G, found in Yersinia enterocolitica serotype O:8 / biotype 1B (strain NCTC 13174 / 8081).